The primary structure comprises 229 residues: DNA repair protein RecO (229 aa).

It belongs to the RecO family.

Its function is as follows. Involved in DNA repair and RecF pathway recombination. In Legionella pneumophila (strain Paris), this protein is DNA repair protein RecO.